A 635-amino-acid polypeptide reads, in one-letter code: Sodium- and chloride-dependent transporter XTRP3B (635 aa).

The segment at 1-38 (MESPSAHAVSLPEDEELQPWGGAGGPGQHPGRPRSTEC) is disordered. At 1-56 (MESPSAHAVSLPEDEELQPWGGAGGPGQHPGRPRSTECAHPGVVEKVRPKWDNPLQ) the chain is on the cytoplasmic side. A helical membrane pass occupies residues 57-77 (FLLVCISYAVGLGNVWRFPYL). At 78-85 (CQMYGGGN) the chain is on the extracellular side. Residues 86-106 (FLVPYIIMLIVEGMPLLYLEL) traverse the membrane as a helical segment. Residues 107–127 (AVGQRMRQGSIGAWRTISPYL) lie on the Cytoplasmic side of the membrane. The chain crosses the membrane as a helical span at residues 128–148 (SGVGIASLVVSFLASVYFNVI). At 149 to 208 (NTWALWYLFHSFQDPLPWSVCPLNSNHTGYDEECEKASSTQYFWYRKTLNISPSIQENGG) the chain is on the extracellular side. Asn-174 is a glycosylation site (N-linked (GlcNAc...) asparagine). Residues 209–229 (VQWEPALCLTLAWLMVYLCIL) form a helical membrane-spanning segment. Residues 230–237 (RGTESTGK) are Cytoplasmic-facing. A helical transmembrane segment spans residues 238–258 (VVYFTTSLPYFVLIIYLVRGL). Residues 259-284 (TLHGATNGLAYMFTPKIEQLANPKAW) lie on the Extracellular side of the membrane. Residues 285 to 305 (INAATQIFFSLGLGCGGLIAF) form a helical membrane-spanning segment. The Cytoplasmic portion of the chain corresponds to 306–319 (ASYNEPSNDCQKHA). A helical transmembrane segment spans residues 320–340 (LIVSVINSTTAIFSSIVTFSI). Residues 341–432 (YGFKATFNYE…EAIKNMEVSQ (92 aa)) lie on the Extracellular side of the membrane. Asn-400 is a glycosylation site (N-linked (GlcNAc...) asparagine). A helical transmembrane segment spans residues 433–453 (LWSVLYFFMLLTLGMGSMVGT). The Cytoplasmic segment spans residues 454 to 474 (GTAILTPLTDSKIISSYLPKE). Residues 475–495 (AISGLVCLLNCAIGMVFTMEA) traverse the membrane as a helical segment. The Extracellular segment spans residues 496–508 (GNYWFDLFNDYTA). Residues 509 to 529 (TLSLLLIVLVETIAVCYVYGL) form a helical membrane-spanning segment. The Cytoplasmic segment spans residues 530 to 547 (KRFESDLRAMTGRTLSWY). The helical transmembrane segment at 548-568 (WKVMWAFVSPLLIVGLFIFYL) threads the bilayer. Residues 569–597 (SDYILTGTLQYQAWDATQGHVVTKDYPTY) lie on the Extracellular side of the membrane. Residues 598–618 (ALAVIGLLVASSTMCIPLVAL) form a helical membrane-spanning segment. At 619–635 (GTFVTRHFKIREQFSAA) the chain is on the cytoplasmic side.

This sequence belongs to the sodium:neurotransmitter symporter (SNF) (TC 2.A.22) family. SLC6A20 subfamily. As to quaternary structure, interacts with CLTRN. Detected only in kidney and lung.

The protein localises to the apical cell membrane. Does not show transporter activity with a range of tested amino acids including proline, glutamine, glutamic acid, leucine, alanine, histidine, glycine and arginine. In Mus musculus (Mouse), this protein is Sodium- and chloride-dependent transporter XTRP3B (Slc6a20b).